The chain runs to 594 residues: UvrABC system protein C (594 aa).

One can recognise a GIY-YIG domain in the interval 13–99; that stretch reads HSSGVYQYFD…IKQLKPKYNI (87 aa). Residues 205–240 enclose the UVR domain; the sequence is DKLIKELELKMERLSNNLRFEEALIYRDRIAKIQKI.

The protein belongs to the UvrC family. Interacts with UvrB in an incision complex.

It is found in the cytoplasm. Its function is as follows. The UvrABC repair system catalyzes the recognition and processing of DNA lesions. UvrC both incises the 5' and 3' sides of the lesion. The N-terminal half is responsible for the 3' incision and the C-terminal half is responsible for the 5' incision. The protein is UvrABC system protein C of Helicobacter pylori (strain HPAG1).